A 689-amino-acid polypeptide reads, in one-letter code: Long-chain-fatty-acid--CoA ligase 2 (689 aa).

252-263 is a binding site for ATP; the sequence is YTSGSTGKPKGV. The FACS motif lies at 518-567; sequence DGWFKTGDVGEIAKGNTLRLIDRKKNIVKSLNGEYIALEKIEAQFFTSPL.

It belongs to the ATP-dependent AMP-binding enzyme family. It depends on Mg(2+) as a cofactor.

The protein localises to the golgi apparatus. Its subcellular location is the vacuole membrane. It carries out the reaction a long-chain fatty acid + ATP + CoA = a long-chain fatty acyl-CoA + AMP + diphosphate. In terms of biological role, esterification, concomitant with transport, of endogenous long-chain fatty acids into metabolically active CoA thioesters for subsequent degradation or incorporation into phospholipids. Plays an important role in the determination of viability in the stationary phase. The sequence is that of Long-chain-fatty-acid--CoA ligase 2 (lcf2) from Schizosaccharomyces pombe (strain 972 / ATCC 24843) (Fission yeast).